We begin with the raw amino-acid sequence, 360 residues long: Phospho-N-acetylmuramoyl-pentapeptide-transferase (360 aa).

The next 10 helical transmembrane spans lie at 26–46 (AILGLLTALMFSLWWGPKLIE), 74–94 (MGGLMILGAIFISVLLWGDLG), 97–117 (YVWVMLFVLGSFGMIGFIDDY), 132–152 (WKYILQSLAALIIAFFLYTTA), 168–188 (VMPQLGAVFIVLAYFTIVGSS), 199–219 (GLAIMPTVMVAAAFALIAYLS), 236–256 (SGELVIVCTAIVGAGLGFLWF), 263–283 (VFMGDVGSLSLGAALGAIAVL), 288–308 (ILLVIMGGVFVMETVSVILQV), and 338–358 (VIVRFWIISIFLVLLGLATLK).

Belongs to the glycosyltransferase 4 family. MraY subfamily. Requires Mg(2+) as cofactor.

It is found in the cell inner membrane. It carries out the reaction UDP-N-acetyl-alpha-D-muramoyl-L-alanyl-gamma-D-glutamyl-meso-2,6-diaminopimeloyl-D-alanyl-D-alanine + di-trans,octa-cis-undecaprenyl phosphate = di-trans,octa-cis-undecaprenyl diphospho-N-acetyl-alpha-D-muramoyl-L-alanyl-D-glutamyl-meso-2,6-diaminopimeloyl-D-alanyl-D-alanine + UMP. The protein operates within cell wall biogenesis; peptidoglycan biosynthesis. Functionally, catalyzes the initial step of the lipid cycle reactions in the biosynthesis of the cell wall peptidoglycan: transfers peptidoglycan precursor phospho-MurNAc-pentapeptide from UDP-MurNAc-pentapeptide onto the lipid carrier undecaprenyl phosphate, yielding undecaprenyl-pyrophosphoryl-MurNAc-pentapeptide, known as lipid I. This Shewanella sp. (strain ANA-3) protein is Phospho-N-acetylmuramoyl-pentapeptide-transferase.